We begin with the raw amino-acid sequence, 248 residues long: Secreted and transmembrane protein 1 (248 aa).

The first 28 residues, 1–28, serve as a signal peptide directing secretion; that stretch reads MQTCPLAFPGHVSQALGTLLFLAASLSA. The Extracellular portion of the chain corresponds to 29-145; sequence QNEGWDSPIC…AEPQSAPDTG (117 aa). The cysteines at positions 38 and 55 are disulfide-linked. N-linked (GlcNAc...) asparagine glycosylation occurs at Asn56. Residues 146-166 traverse the membrane as a helical segment; that stretch reads FWPVPAVVTAVFILLVALVMF. Topologically, residues 167–248 are cytoplasmic; that stretch reads AWYRCRCSQQ…QPLFPYAADP (82 aa).

The protein belongs to the SECTM family. Interacts with CD7. In terms of tissue distribution, detected at the highest levels in peripheral blood leukocytes and breast cancer cell lines. Found in leukocytes of the myeloid lineage, with the strongest expression observed in granulocytes and no detectable expression in lymphocytes. Expressed in thymic epithelial cells and fibroblasts.

It localises to the cell membrane. The protein localises to the secreted. In terms of biological role, may be involved in thymocyte signaling. This chain is Secreted and transmembrane protein 1 (SECTM1), found in Homo sapiens (Human).